The following is a 192-amino-acid chain: Inosine triphosphate pyrophosphatase (192 aa).

11 to 16 serves as a coordination point for ITP; that stretch reads TGNKNK. Residue E41 participates in Mg(2+) binding. ITP is bound by residues K53, 69–70, K86, 146–149, K169, and 174–175; these read DT, FGWD, and HR.

Belongs to the HAM1 NTPase family. As to quaternary structure, homodimer. The cofactor is Mg(2+). Mn(2+) serves as cofactor.

Its subcellular location is the cytoplasm. It carries out the reaction ITP + H2O = IMP + diphosphate + H(+). It catalyses the reaction dITP + H2O = dIMP + diphosphate + H(+). The enzyme catalyses XTP + H2O = XMP + diphosphate + H(+). In terms of biological role, pyrophosphatase that hydrolyzes non-canonical purine nucleotides such as inosine triphosphate (ITP), deoxyinosine triphosphate (dITP) or xanthosine 5'-triphosphate (XTP) to their respective monophosphate derivatives. The enzyme does not distinguish between the deoxy- and ribose forms. Probably excludes non-canonical purines from RNA and DNA precursor pools, thus preventing their incorporation into RNA and DNA and avoiding chromosomal lesions. The chain is Inosine triphosphate pyrophosphatase from Ciona intestinalis (Transparent sea squirt).